We begin with the raw amino-acid sequence, 772 residues long: Polyribonucleotide nucleotidyltransferase (772 aa).

Residues D488 and D494 each contribute to the Mg(2+) site. The region spanning 555–614 is the KH domain; the sequence is PRLTTLKINPEKIRDVIGKGGAVIRGLQEETGTTINIDEDGTITIASTDPEKAEFAKKRI. Residues 624–692 enclose the S1 motif domain; sequence GKVYEGPVTK…EKGRVKLSMK (69 aa). The segment at 690–772 is disordered; it reads SMKALTERPA…QPYAPRDSQE (83 aa). The span at 703–740 shows a compositional bias: basic and acidic residues; sequence YSERPPREDRGDRGDRGGERRERSDRGDRGGDRGERAP. Over residues 743–757 the composition is skewed to low complexity; the sequence is NSEQQQQPRSNEQQP.

This sequence belongs to the polyribonucleotide nucleotidyltransferase family. Mg(2+) serves as cofactor.

Its subcellular location is the cytoplasm. It catalyses the reaction RNA(n+1) + phosphate = RNA(n) + a ribonucleoside 5'-diphosphate. Its function is as follows. Involved in mRNA degradation. Catalyzes the phosphorolysis of single-stranded polyribonucleotides processively in the 3'- to 5'-direction. The protein is Polyribonucleotide nucleotidyltransferase of Variovorax paradoxus (strain S110).